Here is a 316-residue protein sequence, read N- to C-terminus: Cuticle collagen 13 (316 aa).

The first 36 residues, 1-36, serve as a signal peptide directing secretion; that stretch reads MSEDLKQIAQETESLRKVAFFGIAVSTIATLTAIIA. 2 stretches are compositionally biased toward low complexity: residues 127–157 and 183–204; these read SGAA…PGQD and APGQ…GAAL. The disordered stretch occupies residues 127–316; sequence SGAAGPAGSP…CPPPRTAPGY (190 aa). Triple-helical region regions lie at residues 128 to 157, 176 to 202, 206 to 235, 240 to 266, and 269 to 304; these read GAAG…PGQD, GPPG…SGGA, GPPG…PGQV, GTPG…AGSS, and GGPG…EGAC. Residues 205 to 217 show a composition bias toward pro residues; sequence PGPPGPAGPPGPA. Residues 219–234 are compositionally biased toward low complexity; the sequence is QPGSNGNAGAPGAPGQ. Residues 241-251 show a composition bias toward pro residues; the sequence is TPGPAGPPGSP. Low complexity-rich tracts occupy residues 256 to 266 and 276 to 295; these read APGQPGQAGSS and DAGA…PGQD. Pro residues predominate over residues 307-316; sequence CPPPRTAPGY.

This sequence belongs to the cuticular collagen family. Collagen polypeptide chains are complexed within the cuticle by disulfide bonds and other types of covalent cross-links.

In terms of biological role, nematode cuticles are composed largely of collagen-like proteins. The cuticle functions both as an exoskeleton and as a barrier to protect the worm from its environment. This Caenorhabditis elegans protein is Cuticle collagen 13 (col-13).